Reading from the N-terminus, the 651-residue chain is Beta-glucuronidase (651 aa).

A signal peptide spans methionine 1–glycine 22. N-linked (GlcNAc...) asparagine glycosylation is found at asparagine 173, asparagine 272, and asparagine 420. The active-site Proton donor is glutamate 451. Asparagine 631 is a glycosylation site (N-linked (GlcNAc...) asparagine).

Belongs to the glycosyl hydrolase 2 family. As to quaternary structure, homotetramer. In terms of processing, N-linked glycosylated with 3 to 4 oligosaccharide chains.

The protein localises to the lysosome. The enzyme catalyses a beta-D-glucuronoside + H2O = D-glucuronate + an alcohol. Its activity is regulated as follows. Inhibited by L-aspartic acid. In terms of biological role, plays an important role in the degradation of dermatan and keratan sulfates. This Homo sapiens (Human) protein is Beta-glucuronidase (GUSB).